Consider the following 438-residue polypeptide: Indole diterpene prenyltransferase paxD (438 aa).

80–81 (FM) lines the L-tryptophan pocket. Substrate-binding residues include Arg102, Lys190, Arg264, Lys266, Tyr268, Tyr349, and Tyr418.

The protein belongs to the tryptophan dimethylallyltransferase family.

The protein operates within secondary metabolite biosynthesis. Its function is as follows. Indole diterpene prenyltransferase; part of the gene cluster that mediates the biosynthesis of paxilline, a mycotoxin that acts as an inhibitor of mammalian maxi-K channels. PaxG, the geranylgeranyl diphosphate (GGPP) synthase is proposed to catalyze the first step in paxilline biosynthesis. Condensation of indole-3-glycerol phosphate with GGPP by paxC then forms 3-geranylgeranylindole (3-GGI), followed by epoxidation and cyclization of this intermediate (by paxM and paxB) to form paspaline. Paspaline is subsequently converted to 13-desoxypaxilline by paxP, the latter being then converted to paxilline by paxQ. Finally paxilline can be mono- and di-prenylated by paxD. The chain is Indole diterpene prenyltransferase paxD from Penicillium paxilli.